Reading from the N-terminus, the 360-residue chain is Uptake hydrogenase small subunit (360 aa).

Residues Met-1 to Ala-43 constitute a signal peptide (tat-type signal). [4Fe-4S] cluster contacts are provided by Cys-60, Cys-63, Cys-158, Cys-192, His-230, Cys-233, Cys-258, and Cys-264. [3Fe-4S] cluster is bound by residues Cys-273, Cys-292, and Cys-295.

It belongs to the [NiFe]/[NiFeSe] hydrogenase small subunit family. Heterodimer of a large and a small subunit. [4Fe-4S] cluster serves as cofactor. Requires [3Fe-4S] cluster as cofactor. Post-translationally, predicted to be exported by the Tat system. The position of the signal peptide cleavage has been experimentally proven.

It is found in the cell membrane. The enzyme catalyses H2 + A = AH2. Functionally, this enzyme recycles the H(2) produced by nitrogenase to increase the production of ATP and to protect nitrogenase against inhibition or damage by O(2) under carbon- or phosphate-limited conditions. This Cupriavidus necator (strain ATCC 17699 / DSM 428 / KCTC 22496 / NCIMB 10442 / H16 / Stanier 337) (Ralstonia eutropha) protein is Uptake hydrogenase small subunit (hoxK).